An 86-amino-acid chain; its full sequence is Large ribosomal subunit protein bL27 (86 aa).

Residues 1–24 are disordered; the sequence is MATKKAGGSSRNGRDSAGRRLGVK.

Belongs to the bacterial ribosomal protein bL27 family.

The polypeptide is Large ribosomal subunit protein bL27 (Rickettsia conorii (strain ATCC VR-613 / Malish 7)).